The primary structure comprises 648 residues: Putative potassium transport protein DDB_G0292412 (648 aa).

A helical transmembrane segment spans residues 48-68 (LFLLVILVQLGSTVLLTLPIV). Residue Asn-81 is glycosylated (N-linked (GlcNAc...) asparagine). Disordered stretches follow at residues 106–145 (HDFKDDDDENDNNNNEENDDNDDESYQHNNNNNEEHDDND) and 223–261 (QQQQQPSTTTTTTTTTNSTLNKSTNNSTNNNNNTNDSQS). A compositionally biased stretch (acidic residues) spans 110 to 129 (DDDDENDNNNNEENDDNDDE). Residues 199–227 (IIQQQQQQQQQQQQQQQQQQQQQQQQQQQ) adopt a coiled-coil conformation. Asn-239, Asn-243, Asn-247, Asn-248, Asn-254, and Asn-257 each carry an N-linked (GlcNAc...) asparagine glycan. The next 6 helical transmembrane spans lie at 313–333 (LLVIIPCYIITIYILGFISIG), 353–373 (GWWWSLFHTFSAFNNAGLALF), 385–405 (FLLITLSILIFLGNTLFPVFL), 443–463 (VQLFVIWCIFNVSQIALMALL), 472–491 (NMNYGTILLNYYFSSISTRT), and 505–525 (SVLLLFVGLMFVSSYPFIISL). An N-linked (GlcNAc...) asparagine glycan is attached at Asn-536. Helical transmembrane passes span 550–570 (IFVPYICILFIAIFESQLLES), 571–591 (GVITVFQILFEAISAFGNVGL), and 592–612 (SISITLSTYSKLVFIALMLAG).

The protein belongs to the TrkH potassium transport family.

Its subcellular location is the membrane. Its function is as follows. May function as a potassium transporter. The chain is Putative potassium transport protein DDB_G0292412 from Dictyostelium discoideum (Social amoeba).